We begin with the raw amino-acid sequence, 178 residues long: Interleukin-1 receptor antagonist protein (178 aa).

The first 26 residues, 1-26, serve as a signal peptide directing secretion; sequence MEICRGPYSHLISLLLILLFRSESAG. Residues C92 and C142 are joined by a disulfide bond. A glycan (N-linked (GlcNAc...) asparagine) is linked at N110.

Belongs to the IL-1 family.

It localises to the secreted. Functionally, anti-inflammatory antagonist of interleukin-1 family of proinflammatory cytokines such as interleukin-1beta/IL1B and interleukin-1alpha/IL1A. Protects from immune dysregulation and uncontrolled systemic inflammation triggered by IL1 for a range of innate stimulatory agents such as pathogens. The sequence is that of Interleukin-1 receptor antagonist protein (Il1rn) from Rattus norvegicus (Rat).